We begin with the raw amino-acid sequence, 279 residues long: Release factor glutamine methyltransferase (279 aa).

Residues Asp139 and Asn182 each coordinate S-adenosyl-L-methionine. A substrate-binding site is contributed by 182 to 185 (NPPY).

It belongs to the protein N5-glutamine methyltransferase family. PrmC subfamily.

The catalysed reaction is L-glutaminyl-[peptide chain release factor] + S-adenosyl-L-methionine = N(5)-methyl-L-glutaminyl-[peptide chain release factor] + S-adenosyl-L-homocysteine + H(+). Methylates the class 1 translation termination release factors RF1/PrfA and RF2/PrfB on the glutamine residue of the universally conserved GGQ motif. The chain is Release factor glutamine methyltransferase from Thermodesulfovibrio yellowstonii (strain ATCC 51303 / DSM 11347 / YP87).